The sequence spans 739 residues: Poly(A) polymerase alpha (739 aa).

Positions 1–17 (MPFPVTTQGSQQTQPPQ) are enriched in low complexity. The disordered stretch occupies residues 1–23 (MPFPVTTQGSQQTQPPQKHYGIT). 2 positions are modified to phosphoserine: serine 10 and serine 24. ATP contacts are provided by residues 100 to 102 (FGS), threonine 109, 113 to 115 (DID), aspartate 167, lysine 228, tyrosine 237, and 246 to 247 (GV). Aspartate 113, aspartate 115, and aspartate 167 together coordinate Mg(2+). Glycyl lysine isopeptide (Lys-Gly) (interchain with G-Cter in SUMO) cross-links involve residues lysine 444, lysine 445, lysine 506, and lysine 507. Residues 490–507 (RKQLHQLLPSHVLQKKKK) carry the Nuclear localization signal 1 motif. Disordered regions lie at residues 501 to 565 (VLQK…AVTA) and 580 to 700 (QINS…TIQT). Residues 508–643 (HSTEGVKLTP…AKIPNPIVGV (136 aa)) form a ser/Thr-rich region. The segment covering 518-534 (LNDSSLDLSMDSDNSMS) has biased composition (low complexity). The span at 535-557 (VPSPTSAMKTSPLNSSGSSQGRN) shows a compositional bias: polar residues. Phosphoserine; by MAPK is present on serine 537. Position 558 is a phosphoserine (serine 558). Residues 583 to 594 (SSESSGGTSSES) are compositionally biased toward low complexity. The span at 595-604 (IPQTATQPAI) shows a compositional bias: polar residues. Low complexity predominate over residues 611–620 (TVSRVVSSTR). N6-acetyllysine is present on residues lysine 635 and lysine 644. The Nuclear localization signal 2 signature appears at 644–659 (KRTSSPHKEESPKKTK). Basic and acidic residues-rich tracts occupy residues 649–660 (PHKEESPKKTKT) and 676–686 (GHDKTETKEQL). The required for interaction with NUDT21 stretch occupies residues 671–739 (CLALSGHDKT…KNSIKLRLNR (69 aa)). The segment covering 688–700 (TETSTTQSETIQT) has biased composition (low complexity). N6-acetyllysine; alternate is present on lysine 730. A Glycyl lysine isopeptide (Lys-Gly) (interchain with G-Cter in SUMO); alternate cross-link involves residue lysine 730. Serine 732 is modified (phosphoserine). Lysine 734 carries the post-translational modification N6-acetyllysine; alternate. Lysine 734 participates in a covalent cross-link: Glycyl lysine isopeptide (Lys-Gly) (interchain with G-Cter in SUMO); alternate.

The protein belongs to the poly(A) polymerase family. As to quaternary structure, monomer. Found in a complex with CPSF1, FIP1L1 and PAPOLA. Interacts with AHCYL1 and FIP1L1; the interaction with AHCYL1 seems to increase interaction with FIP1L1. Interacts with NUDT21; the interaction is diminished by acetylation. Interacts with KPNB1; the interaction promotes PAP nuclear import and is inhibited by acetylation of PAP. The cofactor is Mg(2+). It depends on Mn(2+) as a cofactor. Polysumoylated. Varying sumoylation depending on tissue- and cell-type. Highly sumoylated in bladder and NIH 3T3 cells. Sumoylation is required for nuclear localization and enhances PAP stability. Desumoylated by SENP1. Inhibits polymerase activity. In terms of processing, hyperphosphorylation on multiple CDK2 consensus and non-consensus sites in the C-terminal Ser/Thr-rich region represses PAP activity in late M-phase. Phosphorylation/dephosphorylation may regulate the interaction between PAP and CPSF. Post-translationally, acetylated in the C-terminus. Acetylation decreases interaction with NUDT21 and KPNB1, and inhibits nuclear localization through inhibiting binding to the importin alpha/beta complex.

The protein localises to the nucleus. It catalyses the reaction RNA(n) + ATP = RNA(n)-3'-adenine ribonucleotide + diphosphate. Polymerase that creates the 3'-poly(A) tail of mRNA's. Also required for the endoribonucleolytic cleavage reaction at some polyadenylation sites. May acquire specificity through interaction with a cleavage and polyadenylation specificity factor (CPSF) at its C-terminus. The protein is Poly(A) polymerase alpha (PAPOLA) of Bos taurus (Bovine).